Here is a 553-residue protein sequence, read N- to C-terminus: CTP synthase (553 aa).

Residues 1 to 266 form an amidoligase domain region; it reads MKYIFVTGGV…GKAVEDLLGL (266 aa). Ser12 contacts CTP. A UTP-binding site is contributed by Ser12. Position 13–18 (13–18) interacts with ATP; it reads SLGKGV. Position 53 (Tyr53) interacts with L-glutamine. Asp70 contributes to the ATP binding site. Residues Asp70 and Glu140 each contribute to the Mg(2+) site. CTP contacts are provided by residues 147 to 149, 187 to 192, and Lys223; these read DIE and KTKPTQ. UTP is bound by residues 187 to 192 and Lys223; that span reads KTKPTQ. A Glutamine amidotransferase type-1 domain is found at 291–541; it reads TIAIAGKYTE…VAAALQSGPS (251 aa). Position 353 (Gly353) interacts with L-glutamine. Cys380 acts as the Nucleophile; for glutamine hydrolysis in catalysis. Residues 381 to 384, Glu404, and Arg464 contribute to the L-glutamine site; that span reads LGMQ. Residues His514 and Glu516 contribute to the active site.

This sequence belongs to the CTP synthase family. As to quaternary structure, homotetramer.

It carries out the reaction UTP + L-glutamine + ATP + H2O = CTP + L-glutamate + ADP + phosphate + 2 H(+). The enzyme catalyses L-glutamine + H2O = L-glutamate + NH4(+). It catalyses the reaction UTP + NH4(+) + ATP = CTP + ADP + phosphate + 2 H(+). It participates in pyrimidine metabolism; CTP biosynthesis via de novo pathway; CTP from UDP: step 2/2. Its activity is regulated as follows. Allosterically activated by GTP, when glutamine is the substrate; GTP has no effect on the reaction when ammonia is the substrate. The allosteric effector GTP functions by stabilizing the protein conformation that binds the tetrahedral intermediate(s) formed during glutamine hydrolysis. Inhibited by the product CTP, via allosteric rather than competitive inhibition. In terms of biological role, catalyzes the ATP-dependent amination of UTP to CTP with either L-glutamine or ammonia as the source of nitrogen. Regulates intracellular CTP levels through interactions with the four ribonucleotide triphosphates. This chain is CTP synthase, found in Deinococcus geothermalis (strain DSM 11300 / CIP 105573 / AG-3a).